The chain runs to 350 residues: Delta(6)-protoilludene synthase STEHIDRAFT_64702 (350 aa).

Mg(2+) contacts are provided by aspartate 89, asparagine 225, serine 229, and glutamate 233. Positions 89 to 93 (DEHSD) match the D(D/E)XX(D/E) motif motif. The short motif at 225 to 233 (NDIVSYNIE) is the NSE motif element. The (2E,6E)-farnesyl diphosphate site is built by arginine 314 and tyrosine 315.

The protein belongs to the terpene synthase family. Mg(2+) is required as a cofactor. Mn(2+) serves as cofactor. Requires Ca(2+) as cofactor. The cofactor is Ni(2+). It depends on Co(2+) as a cofactor.

It catalyses the reaction (2E,6E)-farnesyl diphosphate = Delta(6)-protoilludene + diphosphate. It carries out the reaction (2E,6E)-farnesyl diphosphate = alpha-selinene + diphosphate. Ca(2+) switches the cyclization mechanism of delta(6)-protoilludene synthase from 1,11 to 1,10 cyclization which leads to the production of beta-elemene. Terpene cyclase that catalyzes the cyclization of farnesyl diphosphate (FPP) to delta(6)-protoilludene. In presence of Ca(2+), a significant switch from 1,11 to a dual 1,11/1,10 cyclization occurs, producing beta-elemene as the major product, with lower levels of delta(6)-protoilludene and (E)-beta-caryophyllene, and traces of beta-selinene and alpha-selinene. This chain is Delta(6)-protoilludene synthase STEHIDRAFT_64702, found in Stereum hirsutum (strain FP-91666) (White-rot fungus).